A 340-amino-acid chain; its full sequence is MREPGFWHRPPSLVSRLLLPIAAIYGNIAAARMQKAGTTVGVPVLCVGNYHMGGAGKTPTTLALVALLREFGETPVVLSRGYGGRLQGPVQVDPSRHSAADIGDEPLMMARRVPVVVARDRTDGAALACALGATVILMDDGFQNPALTKDASLIVVDSHRSIGNGSVFPAGPLRAPLPLQVARTDALVVVGDGTAADGLAQQITTKGGVVLRARLVPEPASVEALRGRRVLAFAGIGDPARFVATLRDSGVEVVEQRAFADHHPFTAEELAELAAAAKRDGLTLVTTEKDLARIGGAQQALGVEIVPFAVTLAFGDEAKLRLFLLDRLNGARAAKLAGRR.

An ATP-binding site is contributed by 51 to 58; that stretch reads HMGGAGKT.

Belongs to the LpxK family.

The catalysed reaction is a lipid A disaccharide + ATP = a lipid IVA + ADP + H(+). It participates in glycolipid biosynthesis; lipid IV(A) biosynthesis; lipid IV(A) from (3R)-3-hydroxytetradecanoyl-[acyl-carrier-protein] and UDP-N-acetyl-alpha-D-glucosamine: step 6/6. Transfers the gamma-phosphate of ATP to the 4'-position of a tetraacyldisaccharide 1-phosphate intermediate (termed DS-1-P) to form tetraacyldisaccharide 1,4'-bis-phosphate (lipid IVA). This Rhodopseudomonas palustris (strain ATCC BAA-98 / CGA009) protein is Tetraacyldisaccharide 4'-kinase.